The sequence spans 852 residues: Disrupted in schizophrenia 1 homolog (852 aa).

Disordered regions lie at residues 1 to 86 (MQGG…GLDP), 236 to 264 (EAEPLHQRPQEMAAEASSSDRPHGDPRHL), and 280 to 320 (QVTR…QGGG). The tract at residues 1–294 (MQGGGPRGAP…SSRQSECGTV (294 aa)) is interaction with MAP1A. The span at 65-79 (AGLTGQQSQHSQSKA) shows a compositional bias: polar residues. The segment covering 253-263 (SSDRPHGDPRH) has biased composition (basic and acidic residues). A compositionally biased stretch (low complexity) spans 288–311 (QSECGTVSSSSSDTGFSSQDASSA). The tract at residues 295–693 (SSSSSDTGFS…LGRVWKADLE (399 aa)) is interaction with TRAF3IP1. Coiled coils occupy residues 367–397 (EDGDYDTAETLRQRLEELEQEKGRLSWALPS) and 449–496 (ITRR…LLRW). The segment at 437–594 (LRTTAQDSLP…LLEAKMLALS (158 aa)) is required for localization to punctate cytoplasmic foci. The tract at residues 443 to 852 (DSLPASITRR…PTAGAQETEA (410 aa)) is necessary and sufficient for interaction with PCNT and localization at the centrosome. The segment at 595–852 (GSCFSTAKEL…PTAGAQETEA (258 aa)) is interaction with ATF4 and ATF5. Disordered regions lie at residues 706–746 (EAGS…KSPL) and 833–852 (KEAGEASASYPTAGAQETEA). The interaction with NDEL1 and PAFAH1B1 stretch occupies residues 728–852 (TAALAVPRTP…PTAGAQETEA (125 aa)). Residues 728-852 (TAALAVPRTP…PTAGAQETEA (125 aa)) are interaction with PAFAH1B1. The segment at 802–835 (SHDEALFQSLQGELQTVKETLQAMILQLQPTKEA) is interaction with NDEL1.

In terms of assembly, interacts with NDEL1. Interacts with CCDC88A (via C-terminus); the interaction is direct. Interacts with GSK3B. Interacts with tubulin alpha, ACTN2, ANKHD1, ATF4, ATF5, CEP63, EIF3S3, MAP1A, NDEL1, PAFAH1B1, RANBP9, SPTBN4, SYNE1 and TRAF3IP1. Interaction with microtubules may be mediated in part by TRAF3IP1. Interacts (via C-terminal) with PCNT. Interacts with CHCHD6. Interacts with CCDC141. Interacts with FBXW7, the substrate-recognition component of a SCF (SKP1-CUL1-F-box protein) E3 ubiquitin-protein ligase complex; the interaction targets DISC1 for proteasomal degradation. Interacts with ZNF365. Interacts with ATF4; inhibiting ATF4 transcription factor activity by disrupting ATF4 dimerization and DNA-binding. Interacts with PDE4B. In terms of processing, ubiquitinated. Ubiquitination with 'Lys-48'-linked polyubiquitin chains leads to its proteasomal degradation. Expressed in granule cell precursors within the dentate migratory stream during the first week of postnatal life and in differentiated granule cells of the hippocampus (at protein level). Detected in heart, brain, kidney, and testis. Expressed in dentate gyrus, hippocampus and in the olfactory bulb.

It is found in the cytoplasm. The protein resides in the cytoskeleton. The protein localises to the mitochondrion. It localises to the microtubule organizing center. Its subcellular location is the centrosome. It is found in the postsynaptic density. Involved in the regulation of multiple aspects of embryonic and adult neurogenesis. Required for neural progenitor proliferation in the ventrical/subventrical zone during embryonic brain development and in the adult dentate gyrus of the hippocampus. Participates in the Wnt-mediated neural progenitor proliferation as a positive regulator by modulating GSK3B activity and CTNNB1 abundance. Plays a role as a modulator of the AKT-mTOR signaling pathway controlling the tempo of the process of newborn neurons integration during adult neurogenesis, including neuron positioning, dendritic development and synapse formation. Inhibits the activation of AKT-mTOR signaling upon interaction with CCDC88A. Regulates the migration of early-born granule cell precursors toward the dentate gyrus during the hippocampal development. Inhibits ATF4 transcription factor activity in neurons by disrupting ATF4 dimerization and DNA-binding. Plays a role, together with PCNT, in the microtubule network formation. This Mus musculus (Mouse) protein is Disrupted in schizophrenia 1 homolog.